The chain runs to 504 residues: UDP-N-acetylmuramoylalanine--D-glutamate ligase (504 aa).

Position 129–135 (129–135 (GTNGKTT)) interacts with ATP.

This sequence belongs to the MurCDEF family.

It is found in the cytoplasm. It carries out the reaction UDP-N-acetyl-alpha-D-muramoyl-L-alanine + D-glutamate + ATP = UDP-N-acetyl-alpha-D-muramoyl-L-alanyl-D-glutamate + ADP + phosphate + H(+). It functions in the pathway cell wall biogenesis; peptidoglycan biosynthesis. Cell wall formation. Catalyzes the addition of glutamate to the nucleotide precursor UDP-N-acetylmuramoyl-L-alanine (UMA). In Burkholderia mallei (strain NCTC 10247), this protein is UDP-N-acetylmuramoylalanine--D-glutamate ligase.